A 177-amino-acid chain; its full sequence is Large ribosomal subunit protein uL6 (177 aa).

This sequence belongs to the universal ribosomal protein uL6 family. Part of the 50S ribosomal subunit.

This protein binds to the 23S rRNA, and is important in its secondary structure. It is located near the subunit interface in the base of the L7/L12 stalk, and near the tRNA binding site of the peptidyltransferase center. This is Large ribosomal subunit protein uL6 from Ruegeria pomeroyi (strain ATCC 700808 / DSM 15171 / DSS-3) (Silicibacter pomeroyi).